The following is a 106-amino-acid chain: NADH-quinone oxidoreductase subunit K (106 aa).

3 helical membrane passes run 10-30 (VTYILGLAGILFSIGVLGVLI), 34-54 (IVIIFMSVELILNSVNLVFVT), and 67-87 (IVFFVMAIAAAEAAVGLALVI).

This sequence belongs to the complex I subunit 4L family. In terms of assembly, NDH-1 is composed of 14 different subunits. Subunits NuoA, H, J, K, L, M, N constitute the membrane sector of the complex.

Its subcellular location is the cell inner membrane. It catalyses the reaction a quinone + NADH + 5 H(+)(in) = a quinol + NAD(+) + 4 H(+)(out). In terms of biological role, NDH-1 shuttles electrons from NADH, via FMN and iron-sulfur (Fe-S) centers, to quinones in the respiratory chain. The immediate electron acceptor for the enzyme in this species is believed to be ubiquinone. Couples the redox reaction to proton translocation (for every two electrons transferred, four hydrogen ions are translocated across the cytoplasmic membrane), and thus conserves the redox energy in a proton gradient. The chain is NADH-quinone oxidoreductase subunit K from Leptospira biflexa serovar Patoc (strain Patoc 1 / Ames).